Here is a 315-residue protein sequence, read N- to C-terminus: Methionyl-tRNA formyltransferase (315 aa).

Residue 113-116 coordinates (6S)-5,6,7,8-tetrahydrofolate; it reads SLLP.

It belongs to the Fmt family.

The enzyme catalyses L-methionyl-tRNA(fMet) + (6R)-10-formyltetrahydrofolate = N-formyl-L-methionyl-tRNA(fMet) + (6S)-5,6,7,8-tetrahydrofolate + H(+). Functionally, attaches a formyl group to the free amino group of methionyl-tRNA(fMet). The formyl group appears to play a dual role in the initiator identity of N-formylmethionyl-tRNA by promoting its recognition by IF2 and preventing the misappropriation of this tRNA by the elongation apparatus. The protein is Methionyl-tRNA formyltransferase of Escherichia fergusonii (strain ATCC 35469 / DSM 13698 / CCUG 18766 / IAM 14443 / JCM 21226 / LMG 7866 / NBRC 102419 / NCTC 12128 / CDC 0568-73).